The sequence spans 122 residues: Large ribosomal subunit protein uL14 (122 aa).

It belongs to the universal ribosomal protein uL14 family. As to quaternary structure, part of the 50S ribosomal subunit. Forms a cluster with proteins L3 and L19. In the 70S ribosome, L14 and L19 interact and together make contacts with the 16S rRNA in bridges B5 and B8.

Binds to 23S rRNA. Forms part of two intersubunit bridges in the 70S ribosome. This chain is Large ribosomal subunit protein uL14, found in Delftia acidovorans (strain DSM 14801 / SPH-1).